The sequence spans 292 residues: Elongation factor Ts (292 aa).

The interval 80-83 is involved in Mg(2+) ion dislocation from EF-Tu; the sequence is TDFV.

It belongs to the EF-Ts family.

The protein resides in the cytoplasm. Functionally, associates with the EF-Tu.GDP complex and induces the exchange of GDP to GTP. It remains bound to the aminoacyl-tRNA.EF-Tu.GTP complex up to the GTP hydrolysis stage on the ribosome. The chain is Elongation factor Ts from Pediococcus pentosaceus (strain ATCC 25745 / CCUG 21536 / LMG 10740 / 183-1w).